A 526-amino-acid chain; its full sequence is Neutrophil cytosol factor 2 (526 aa).

TPR repeat units follow at residues 37 to 70 (SRICFNIGCMYTILKNMTEAEKAFTRSINRDKHL), 71 to 104 (AVAYFQRGMLYYQTEKYDLAIKDLKEALIQLRGN), and 121 to 154 (CEVLYNIAFMYAKKEEWKKAEEQLALATSMKSEP). At threonine 233 the chain carries Phosphothreonine. Positions 240 to 299 (LEGEAHRVLFGFVPETKEELQVMPGNIVFVLKKGNDNWATVMFNGQKGLVPCNYLEPVEL) constitute an SH3 1 domain. Residues 303–315 (PQQQPQEESSPQS) show a composition bias toward low complexity. The segment at 303 to 346 (PQQQPQEESSPQSDIPAPPSSKAPGRPQLSPGQKQKEEPKEVKL) is disordered. Over residues 336–345 (KQKEEPKEVK) the composition is skewed to basic and acidic residues. In terms of domain architecture, PB1 spans 351 to 429 (PYTLKVHYKY…YCLTLWCENT (79 aa)). Serine 399 carries the post-translational modification Phosphoserine. Positions 433–458 (QGFPDEPKESEKADANNQTTEPQLKK) are disordered. The segment covering 437–446 (DEPKESEKAD) has biased composition (basic and acidic residues). Residues 457-516 (KKGSQVEALFSYEATQPEDLEFQEGDIILVLSKVNEEWLEGECKGKVGIFPKVFVEDCAT) form the SH3 2 domain.

This sequence belongs to the NCF2/NOXA1 family. Component of the phagocyte NADPH oxidase complex composed of an obligatory core heterodimer formed by the membrane proteins CYBA and CYBB and the cytosolic regulatory subunits NCF1/p47-phox, NCF2/p67-phox, NCF4/p40-phox and the small GTPase RAC1 or RAC2. Part of a cytosolic complex composed at least by NCF1, NCF2 and NCF4. Interacts with NCF4. Interacts (via the C-terminal SH3 domain) with NCF1 (via C-terminus). Interacts with SYTL1 and RAC1. May interact with NOXO1. Interacts with S100A8 and calprotectin (S100A8/9). Interacts with GBP7 (via GB1/RHD3-type G domain). Interacts with CYBB; the interaction is enhanced in the presence of GBP7.

Its subcellular location is the cytoplasm. Functionally, subunit of the phagocyte NADPH oxidase complex that mediates the transfer of electrons from cytosolic NADPH to O2 to produce the superoxide anion (O2(-)). In the activated complex, electrons are first transferred from NADPH to flavin adenine dinucleotide (FAD) and subsequently transferred via two heme molecules to molecular oxygen, producing superoxide through an outer-sphere reaction. Activation of the NADPH oxidase complex is initiated by the assembly of cytosolic subunits of the NADPH oxidase complex with the core NADPH oxidase complex to form a complex at the plasma membrane or phagosomal membrane. This activation process is initiated by phosphorylation dependent binding of the cytosolic NCF1/p47-phox subunit to the C-terminus of CYBA/p22-phox. The polypeptide is Neutrophil cytosol factor 2 (Homo sapiens (Human)).